Consider the following 432-residue polypeptide: Adenylosuccinate synthetase (432 aa).

Residues 13–19 (GDEGKGK) and 41–43 (GHT) each bind GTP. The active-site Proton acceptor is the aspartate 14. The Mg(2+) site is built by aspartate 14 and glycine 41. IMP is bound by residues 14–17 (DEGK), 39–42 (NAGH), threonine 130, arginine 144, glutamine 225, threonine 240, and arginine 304. Histidine 42 serves as the catalytic Proton donor. 300–306 (AVTGRPR) is a binding site for substrate. Residues arginine 306, 332–334 (KLD), and 415–417 (STG) each bind GTP.

Belongs to the adenylosuccinate synthetase family. Homodimer. It depends on Mg(2+) as a cofactor.

The protein localises to the cytoplasm. The catalysed reaction is IMP + L-aspartate + GTP = N(6)-(1,2-dicarboxyethyl)-AMP + GDP + phosphate + 2 H(+). It functions in the pathway purine metabolism; AMP biosynthesis via de novo pathway; AMP from IMP: step 1/2. Functionally, plays an important role in the de novo pathway of purine nucleotide biosynthesis. Catalyzes the first committed step in the biosynthesis of AMP from IMP. The sequence is that of Adenylosuccinate synthetase from Haemophilus influenzae (strain ATCC 51907 / DSM 11121 / KW20 / Rd).